A 271-amino-acid chain; its full sequence is GATA transcription factor 19 (271 aa).

A disordered region spans residues 1–23 (MAAEPPADGRDPPADDGAAGDGA). Positions 33 to 68 (LSAASEQLTLVYQGEVYVFDPVPPQKVQAVLLVLGG) constitute a Tify domain. One can recognise a CCT domain in the interval 95-137 (RIASLMRFREKRKERCFDKKIRYSVRKEVAQKMKRRKGQFAGR). The segment at 166-193 (CQNCGISSRLTPAMRRGPAGPRSLCNAC) adopts a GATA-type zinc-finger fold. Residues 238-271 (NQTTMKTDTEMVPEQEQKADVLPPTKEEDSMATS) form a disordered region. Over residues 252 to 271 (QEQKADVLPPTKEEDSMATS) the composition is skewed to basic and acidic residues.

The protein belongs to the type IV zinc-finger family. Class C subfamily.

Its subcellular location is the nucleus. Its function is as follows. Transcriptional activator that specifically binds 5'-GATA-3' or 5'-GAT-3' motifs within gene promoters. In Oryza sativa subsp. indica (Rice), this protein is GATA transcription factor 19.